Here is a 195-residue protein sequence, read N- to C-terminus: Small ribosomal subunit protein eS1 (195 aa).

It belongs to the eukaryotic ribosomal protein eS1 family.

This Methanothermobacter thermautotrophicus (strain ATCC 29096 / DSM 1053 / JCM 10044 / NBRC 100330 / Delta H) (Methanobacterium thermoautotrophicum) protein is Small ribosomal subunit protein eS1.